A 343-amino-acid polypeptide reads, in one-letter code: Phenylalanine--tRNA ligase alpha subunit (343 aa).

A Mg(2+)-binding site is contributed by glutamate 256.

Belongs to the class-II aminoacyl-tRNA synthetase family. Phe-tRNA synthetase alpha subunit type 1 subfamily. In terms of assembly, tetramer of two alpha and two beta subunits. Mg(2+) serves as cofactor.

It is found in the cytoplasm. The enzyme catalyses tRNA(Phe) + L-phenylalanine + ATP = L-phenylalanyl-tRNA(Phe) + AMP + diphosphate + H(+). In Prosthecochloris aestuarii (strain DSM 271 / SK 413), this protein is Phenylalanine--tRNA ligase alpha subunit.